Consider the following 542-residue polypeptide: Apolipoprotein N-acyltransferase (542 aa).

Helical transmembrane passes span 24–44 (VVAS…GLFA), 54–74 (VWCI…SWML), 85–105 (FVWG…SCLV), 116–136 (ALVW…YGLL), 160–180 (FFGW…CFAV), and 190–210 (GLWL…YEYL). A CN hydrolase domain is found at 220-499 (LRVAIVQPGY…TGVLQVSVPL (280 aa)). Catalysis depends on Glu-264, which acts as the Proton acceptor. Lys-349 is an active-site residue. Residue Cys-404 is the Nucleophile of the active site. Residues 509-529 (LGDAPLLLIAVCSVIGAIAYF) traverse the membrane as a helical segment.

The protein belongs to the CN hydrolase family. Apolipoprotein N-acyltransferase subfamily.

Its subcellular location is the cell inner membrane. It catalyses the reaction N-terminal S-1,2-diacyl-sn-glyceryl-L-cysteinyl-[lipoprotein] + a glycerophospholipid = N-acyl-S-1,2-diacyl-sn-glyceryl-L-cysteinyl-[lipoprotein] + a 2-acyl-sn-glycero-3-phospholipid + H(+). It functions in the pathway protein modification; lipoprotein biosynthesis (N-acyl transfer). Its function is as follows. Catalyzes the phospholipid dependent N-acylation of the N-terminal cysteine of apolipoprotein, the last step in lipoprotein maturation. This chain is Apolipoprotein N-acyltransferase, found in Chlamydia trachomatis serovar D (strain ATCC VR-885 / DSM 19411 / UW-3/Cx).